A 366-amino-acid polypeptide reads, in one-letter code: Cyanide hydratase (366 aa).

One can recognise a CN hydrolase domain in the interval 6–285; that stretch reads YKAAAVTSEP…DGLMFVDIDL (280 aa). Glu-46 acts as the Proton acceptor in catalysis. The active site involves Lys-128. Cys-163 (nucleophile) is an active-site residue.

This sequence belongs to the carbon-nitrogen hydrolase superfamily. Nitrilase family. As to quaternary structure, oligomer of dimers, forming left-handed helical fibers.

It carries out the reaction formamide = hydrogen cyanide + H2O. Functionally, catalyzes the hydration of cyanide to formamide. Degradation of cyanide may be important for plant pathogenic fungi in infection of cyanogenic plants. Can also transform some nitriles like 2-cyanopyridine and fumaronitrile. This chain is Cyanide hydratase, found in Pyrenophora teres f. teres (strain 0-1) (Barley net blotch fungus).